A 141-amino-acid chain; its full sequence is Auxin-responsive protein SAUR63 (141 aa).

This sequence belongs to the ARG7 family. As to expression, expressed in hypocotyls, cotyledons, petioles, young rosette leaves, apical portion of inflorescence stems, stamen filaments and petals.

The protein resides in the cell membrane. May promote auxin-stimulated organ elongation, such as hypocotyls, stamen filaments and petals. The polypeptide is Auxin-responsive protein SAUR63 (Arabidopsis thaliana (Mouse-ear cress)).